Here is a 343-residue protein sequence, read N- to C-terminus: L-threonine 3-dehydrogenase (343 aa).

Residue Cys-38 coordinates Zn(2+). Active-site charge relay system residues include Thr-40 and His-43. Zn(2+)-binding residues include His-63, Glu-64, Cys-93, Cys-96, Cys-99, and Cys-107. Residues Ile-176, Asp-196, Arg-201, 261–263, and 286–288 contribute to the NAD(+) site; these read LGI and IAG.

Belongs to the zinc-containing alcohol dehydrogenase family. Homotetramer. Zn(2+) serves as cofactor.

The protein resides in the cytoplasm. The enzyme catalyses L-threonine + NAD(+) = (2S)-2-amino-3-oxobutanoate + NADH + H(+). It functions in the pathway amino-acid degradation; L-threonine degradation via oxydo-reductase pathway; glycine from L-threonine: step 1/2. Its function is as follows. Catalyzes the NAD(+)-dependent oxidation of L-threonine to 2-amino-3-ketobutyrate. In Thermus thermophilus (strain ATCC 27634 / DSM 579 / HB8), this protein is L-threonine 3-dehydrogenase.